A 957-amino-acid polypeptide reads, in one-letter code: Glycine dehydrogenase (decarboxylating) (957 aa).

At Lys708 the chain carries N6-(pyridoxal phosphate)lysine.

It belongs to the GcvP family. As to quaternary structure, the glycine cleavage system is composed of four proteins: P, T, L and H. The cofactor is pyridoxal 5'-phosphate.

The enzyme catalyses N(6)-[(R)-lipoyl]-L-lysyl-[glycine-cleavage complex H protein] + glycine + H(+) = N(6)-[(R)-S(8)-aminomethyldihydrolipoyl]-L-lysyl-[glycine-cleavage complex H protein] + CO2. Functionally, the glycine cleavage system catalyzes the degradation of glycine. The P protein binds the alpha-amino group of glycine through its pyridoxal phosphate cofactor; CO(2) is released and the remaining methylamine moiety is then transferred to the lipoamide cofactor of the H protein. This chain is Glycine dehydrogenase (decarboxylating), found in Klebsiella pneumoniae (strain 342).